The primary structure comprises 479 residues: Catalase A (479 aa).

Histidine 63 is an active-site residue. Tyrosine 346 contacts heme.

This sequence belongs to the catalase family. Heme is required as a cofactor.

The protein resides in the peroxisome matrix. It carries out the reaction 2 H2O2 = O2 + 2 H2O. Functionally, catalyzes the degradation of hydrogen peroxide (H(2)O(2)) generated by peroxisomal oxidases to water and oxygen, thereby protecting cells from the toxic effects of hydrogen peroxide. This chain is Catalase A (catA), found in Botryotinia fuckeliana (Noble rot fungus).